The following is a 1508-amino-acid chain: Calponin homology domain-containing protein DDB_G0272472 (1508 aa).

Disordered regions lie at residues 1–165, 197–290, 309–518, 531–561, 680–706, and 1036–1391; these read MFRN…KNDF, DSEE…NLSP, DFKS…TSIV, AANATTTNNDNNNNNNNTSSPTNKSTNLFND, KEKQDQLEKQRKLEQQRLQKEKDEKEL, and KIEK…KKSA. The span at 81–107 shows a compositional bias: low complexity; that stretch reads SSSPSTSTTTTTKSSSTTTTTTTSSSS. The segment covering 208-222 has biased composition (basic and acidic residues); that stretch reads PIKKKQSNDLEKNIF. Composition is skewed to low complexity over residues 234-251, 263-290, and 315-332; these read KQSTVTKPKQPQQQQKQP, FGDSSLSLDSPLLASKSSPPKSSVNLSP, and SNNTTTVKKAVPISKSKP. 2 stretches are compositionally biased toward basic and acidic residues: residues 337 to 346 and 362 to 371; these read QKEEIKEVST and VDEKPKERST. Over residues 380 to 391 the composition is skewed to polar residues; sequence KTVTVKSNNSFE. Over residues 395–438 the composition is skewed to low complexity; it reads FGSTTTNDDGGDNDFSFTPATTPSSSSSTKATTTSPSSTTTTKS. A compositionally biased stretch (polar residues) spans 439–452; the sequence is NINIGQKSNKSVDQ. Positions 455 to 498 form a coiled coil; that stretch reads QFLNDIFQQEEQDKKRREEEAKLKQQQKQKEKEQIKDEIDDLFK. A compositionally biased stretch (basic and acidic residues) spans 465 to 498; the sequence is EQDKKRREEEAKLKQQQKQKEKEQIKDEIDDLFK. Low complexity-rich tracts occupy residues 500–516 and 531–557; these read SKPTTTTTSTPSKSTTS and AANATTTNNDNNNNNNNTSSPTNKSTN. Residues 1036–1164 show a composition bias toward basic and acidic residues; the sequence is KIEKEKEERD…DQEEKEKQLK (129 aa). 2 stretches are compositionally biased toward low complexity: residues 1165–1181 and 1189–1206; these read EQQQQQKVIIPTTTTTT and DSDALLNLPDSASSSSHS. A compositionally biased stretch (basic residues) spans 1216–1225; that stretch reads SKAKGRKKPT. Residues 1226-1235 show a composition bias toward basic and acidic residues; that stretch reads RRELTKDGNR. Over residues 1333–1355 the composition is skewed to low complexity; sequence PTVTQTTTTTTTPPTTPPSSSVQ. The segment covering 1362–1374 has biased composition (polar residues); it reads RSFSGSSFMGINS. The Calponin-homology (CH) domain maps to 1397–1504; the sequence is MKALDVLLQW…YLSEFFKVMK (108 aa).

The chain is Calponin homology domain-containing protein DDB_G0272472 from Dictyostelium discoideum (Social amoeba).